Consider the following 406-residue polypeptide: Tubby-like F-box protein 3 (406 aa).

Residues 50 to 105 enclose the F-box domain; the sequence is SCWASMPPELLRDVLMRIEQSEDTWPSRKNVVSCAGVCRNWREIVKEIVRVPELSS.

It belongs to the TUB family. Ubiquitous at low levels. Not detected in mature siliques.

The protein resides in the cell membrane. Its subcellular location is the plastid. It is found in the nucleus. The protein localises to the nucleoplasm. It localises to the cytoplasm. Functionally, involved in abiotic stress signaling. Tethered to plasma membrane (PM) and probably bound to phosphatidylinositol 4,5-bisphosphate. Abiotic stresses (drought, salt, H(2)O(2)) trigger phospholipase C mediated PM dislogement and plastidial and nucleocytosolic relocation of TULP3. This chain is Tubby-like F-box protein 3, found in Arabidopsis thaliana (Mouse-ear cress).